Here is a 165-residue protein sequence, read N- to C-terminus: Basic transcription factor 3 (165 aa).

The NAC-A/B domain occupies 33–97 (TTDDKRLQST…PQTKKLQDIL (65 aa)). The span at 120–134 (QKQASGEGNAASATI) shows a compositional bias: polar residues. The disordered stretch occupies residues 120 to 144 (QKQASGEGNAASATIQEEDDDDVPE).

The protein belongs to the NAC-beta family. Part of the nascent polypeptide-associated complex (NAC). Interacts with EIF(ISO)4E.

In Arabidopsis thaliana (Mouse-ear cress), this protein is Basic transcription factor 3.